Here is a 341-residue protein sequence, read N- to C-terminus: Alpha-ketoglutarate-dependent dioxygenase oryG (341 aa).

His100 is a binding site for substrate. Fe cation contacts are provided by His140 and Asp142. Thr167 serves as a coordination point for 2-oxoglutarate. His299 is a Fe cation binding site. The 2-oxoglutarate site is built by Arg311 and Arg315. Arg315 lines the substrate pocket.

Belongs to the TfdA dioxygenase family. Fe(2+) is required as a cofactor.

Its pathway is secondary metabolite biosynthesis. Functionally, alpha-ketoglutarate-dependent dioxygenase; part of the gene cluster that mediates the biosynthesis of oryzines, natural products with an unusual maleidride backbone. The two subunits of the fungal fatty acid synthase oryfasA and oryfasB probably form octenoic acid. This fatty acid is most likely activated by the acyl-CoA ligase oryP to give octenyl-CoA before the citrate synthase-like protein oryE catalyzes condensation with oxaloacetate to form tricarboxylic acid. The next steps of the pathways are conjectural, but a favorite possible route has been proposed, beginning with decarboxylation and concomitant dehydration by the decarboxylase oryM, followed by tautomerization, which may lead to the production of a diene intermediate. Reduction of this diene intermediate could give the known metabolite piliformic acid. On the pathway to oryzine B and oryzine A, however, hydroxylation of the diene by the alpha-ketoglutarate-dependent dioxygenase oryG and lactonisation by the lactonohydrolases oryH or oryL could give oryzine B directly. Finally, enoyl reduction by the dehydrogenase oryD would then convert oryzine B into oryzine A. This Aspergillus oryzae (strain ATCC 42149 / RIB 40) (Yellow koji mold) protein is Alpha-ketoglutarate-dependent dioxygenase oryG.